A 490-amino-acid polypeptide reads, in one-letter code: MTVAAPAKVQYEAVIGLEVHCQLSTRSKIFSSSATAFGAPPNTQIDPICMGLPGTLPVLNEKVLEYAVKAGLALNCTIAPYSKFDRKQYFYPDLPKNYQISQYDLPIATHGWIEIQLSDGRTKRIGITRLHMEEDAGKLVHAGSDRLSGSSYSLVDFNRAGVPLIEIVSEPDIRSGEEAAEYVQELRRILRYAGLCDGNLQEGSLRCDVNISVRPLGSQTFGTKVEIKNMNSFNAIQRAIEYEFNRQVKAVEAGERIVQETRLWEENSQRTISMRKKEGSSDYRYFPEPDLPPIRVTEAQKTRWQAELPELPGVKRRRYQEVYGLSVYDARYLSDERNTAEYFEAVIAAGADPKAAANWMMSDIASYLNTHKLDYPDIALKPETLAELIGLIEQGTISSKIAKEILPELLEKGGSARALVEAKGMTQISDSALLGQMIAEVLAENPEQLQQYRGGKTKLFGYFVGQLMKKTQGRADPKLANDLLKQHLDG.

The protein belongs to the GatB/GatE family. GatB subfamily. In terms of assembly, heterotrimer of A, B and C subunits.

The enzyme catalyses L-glutamyl-tRNA(Gln) + L-glutamine + ATP + H2O = L-glutaminyl-tRNA(Gln) + L-glutamate + ADP + phosphate + H(+). It catalyses the reaction L-aspartyl-tRNA(Asn) + L-glutamine + ATP + H2O = L-asparaginyl-tRNA(Asn) + L-glutamate + ADP + phosphate + 2 H(+). Its function is as follows. Allows the formation of correctly charged Asn-tRNA(Asn) or Gln-tRNA(Gln) through the transamidation of misacylated Asp-tRNA(Asn) or Glu-tRNA(Gln) in organisms which lack either or both of asparaginyl-tRNA or glutaminyl-tRNA synthetases. The reaction takes place in the presence of glutamine and ATP through an activated phospho-Asp-tRNA(Asn) or phospho-Glu-tRNA(Gln). This chain is Aspartyl/glutamyl-tRNA(Asn/Gln) amidotransferase subunit B, found in Synechococcus sp. (strain JA-2-3B'a(2-13)) (Cyanobacteria bacterium Yellowstone B-Prime).